The following is a 65-amino-acid chain: MSKKAPAQKEKKLPRAATWYELDLEKGVFRFKNKLCPKCGSVMAFHKEPVPRWHCGKCGYTQFQR.

Zn(2+) contacts are provided by Cys-36, Cys-39, Cys-55, and Cys-58. Residues 36 to 58 (CPKCGSVMAFHKEPVPRWHCGKC) form a C4-type zinc finger.

This sequence belongs to the eukaryotic ribosomal protein eS31 family. Part of the 30S ribosomal subunit. Zn(2+) is required as a cofactor.

This is Small ribosomal subunit protein eS31 from Pyrobaculum aerophilum (strain ATCC 51768 / DSM 7523 / JCM 9630 / CIP 104966 / NBRC 100827 / IM2).